Consider the following 198-residue polypeptide: Recombination protein RecR (198 aa).

The C4-type zinc finger occupies 56–71 (CHVCGNVDTGDPCGIC). A Toprim domain is found at 79–174 (RMLCVVEEVA…RLTQLAHGLP (96 aa)).

The protein belongs to the RecR family.

May play a role in DNA repair. It seems to be involved in an RecBC-independent recombinational process of DNA repair. It may act with RecF and RecO. In Rhizorhabdus wittichii (strain DSM 6014 / CCUG 31198 / JCM 15750 / NBRC 105917 / EY 4224 / RW1) (Sphingomonas wittichii), this protein is Recombination protein RecR.